The primary structure comprises 845 residues: Protein TSD2 (845 aa).

The disordered stretch occupies residues 193–283 (DVDSDSESDS…SASATRLTNA (91 aa)). 2 stretches are compositionally biased toward basic and acidic residues: residues 202–212 (SDSHSDSHSDS) and 230–242 (ARSH…DGSG). Over residues 243 to 272 (GKRKRGSHSPLSRRRQRHKQGQRHKPRHRS) the composition is skewed to basic residues.

This sequence belongs to the CDC45 family.

It is found in the nucleus. Functionally, temperature-sensitive protein required for DNA synthesis. May be a transcription factor that regulates the level or influences the stability of DNA polymerases or auxiliary proteins. The protein is Protein TSD2 (TSD2) of Mycosarcoma maydis (Corn smut fungus).